We begin with the raw amino-acid sequence, 226 residues long: N-(5'-phosphoribosyl)anthranilate isomerase (226 aa).

The protein belongs to the TrpF family.

The enzyme catalyses N-(5-phospho-beta-D-ribosyl)anthranilate = 1-(2-carboxyphenylamino)-1-deoxy-D-ribulose 5-phosphate. Its pathway is amino-acid biosynthesis; L-tryptophan biosynthesis; L-tryptophan from chorismate: step 3/5. In Synechococcus sp. (strain JA-3-3Ab) (Cyanobacteria bacterium Yellowstone A-Prime), this protein is N-(5'-phosphoribosyl)anthranilate isomerase.